The following is a 204-amino-acid chain: Partner of Y14 and mago (204 aa).

Disordered regions lie at residues 1–121 and 133–153; these read MGSR…QSVN and SSNNDVCGGAPNPGTTGEDVE. The span at 7–36 shows a compositional bias: basic and acidic residues; that stretch reads EQGKRMAELSKNLKEGERILEPTRRPDGTL. Polar residues predominate over residues 104 to 121; it reads KANSSEDGSASNGSQSVN. The short motif at 195–200 is the Nuclear export signal element; the sequence is ELKALE.

This sequence belongs to the pym family. In terms of assembly, interacts with MAGO and Y14. As to expression, expressed in root and shoot meristems, cotyledons, vascular tissues of leaves, receptacle of flowers and siliques, and pollen grains.

Its subcellular location is the cytoplasm. The protein localises to the nucleus. It localises to the nucleolus. It is found in the nucleoplasm. In terms of biological role, key regulator of the exon junction complex (EJC), a multiprotein complex that associates immediately upstream of the exon-exon junction on mRNAs and serves as a positional landmark for the intron exon structure of genes and directs post-transcriptional processes in the cytoplasm such as mRNA export, nonsense-mediated mRNA decay (NMD) or translation. Acts as an EJC disassembly factor, allowing translation-dependent EJC removal and recycling by disrupting mature EJC from spliced mRNAs. Can increase in vitro the expression from reporter constructs that contain leader introns required for the expression of different genes. In association with MAGO and PYM, participates in intron-mediated enhancement of gene expression. This chain is Partner of Y14 and mago, found in Arabidopsis thaliana (Mouse-ear cress).